Consider the following 289-residue polypeptide: ATP phosphoribosyltransferase (289 aa).

It belongs to the ATP phosphoribosyltransferase family. Long subfamily. The cofactor is Mg(2+).

It is found in the cytoplasm. It carries out the reaction 1-(5-phospho-beta-D-ribosyl)-ATP + diphosphate = 5-phospho-alpha-D-ribose 1-diphosphate + ATP. The protein operates within amino-acid biosynthesis; L-histidine biosynthesis; L-histidine from 5-phospho-alpha-D-ribose 1-diphosphate: step 1/9. With respect to regulation, feedback inhibited by histidine. In terms of biological role, catalyzes the condensation of ATP and 5-phosphoribose 1-diphosphate to form N'-(5'-phosphoribosyl)-ATP (PR-ATP). Has a crucial role in the pathway because the rate of histidine biosynthesis seems to be controlled primarily by regulation of HisG enzymatic activity. In Pelotomaculum thermopropionicum (strain DSM 13744 / JCM 10971 / SI), this protein is ATP phosphoribosyltransferase.